The following is a 791-amino-acid chain: mRNA 3'-end-processing protein RNA14 (791 aa).

6 HAT repeats span residues 44 to 76, 78 to 112, 119 to 154, 165 to 198, 231 to 263, and 273 to 305; these read DNQEQVRNTFDKYLKIFKFDGASWCKYIKYELN, DEKEKVENLFQQCLGITDNVELCRLYVDYVRGVTD, KARGVVVQAFEFAINKVGIDITSESLWQDYIQFLQS, QKIDLIRKVYKKFLTIPTENIEVSWSQYTKWENE, KSLKRNLNPGDHNDEDVVKQLKYWLRWLELEKE, and VNDKRIQYVYKQATYALPFVPEIWFQYVKYLLV. The span at 379–388 shows a compositional bias: basic and acidic residues; that stretch reads IDPATDKDNI. 2 disordered regions span residues 379–449 and 725–745; these read IDPA…APSS and QKTRVQQEQDQENQGINKPEE. The span at 389–411 shows a compositional bias: acidic residues; it reads QEDDDDNEEEEEEENDNDNDNDN. Residues 427–442 are compositionally biased toward low complexity; the sequence is NPNGGQNGSNSENNGE.

The protein resides in the nucleus. It localises to the cytoplasm. Its function is as follows. Component of the cleavage factor IA (CFIA) complex, which is involved in the endonucleolytic cleavage during polyadenylation-dependent pre-mRNA 3'-end formation. This is mRNA 3'-end-processing protein RNA14 (RNA14) from Candida albicans (strain SC5314 / ATCC MYA-2876) (Yeast).